The chain runs to 486 residues: Secreted protein C (486 aa).

The N-terminal stretch at 1 to 22 (MKINIILLFVGLILAFAVLSNA) is a signal peptide. Positions 30 to 332 (GVNPFDNNNS…SGSHGGSSSH (303 aa)) are disordered. N37 is a glycosylation site (N-linked (GlcNAc...) asparagine). Residues 41–60 (SGSGSGSGGGSSSSGSGTGQ) show a composition bias toward gly residues. The span at 61–318 (SSGTVSSSGS…TGSSEYSSSS (258 aa)) shows a compositional bias: low complexity. N-linked (GlcNAc...) asparagine glycans are attached at residues N73, N74, N83, N112, N129, N149, and N174.

The protein belongs to the Sct family.

It is found in the secreted. In Dictyostelium discoideum (Social amoeba), this protein is Secreted protein C.